Consider the following 343-residue polypeptide: 4-hydroxy-2-oxovalerate aldolase 4 (343 aa).

A Pyruvate carboxyltransferase domain is found at 8–260; sequence VTVHDMTLRD…ETGVDVAKIT (253 aa). 16–17 serves as a coordination point for substrate; sequence RD. Asp-17 is a binding site for Mn(2+). His-20 functions as the Proton acceptor in the catalytic mechanism. Residues Ser-170 and His-199 each contribute to the substrate site. Mn(2+) contacts are provided by His-199 and His-201. Position 290 (Tyr-290) interacts with substrate.

This sequence belongs to the 4-hydroxy-2-oxovalerate aldolase family.

It catalyses the reaction (S)-4-hydroxy-2-oxopentanoate = acetaldehyde + pyruvate. In Dechloromonas aromatica (strain RCB), this protein is 4-hydroxy-2-oxovalerate aldolase 4.